A 485-amino-acid chain; its full sequence is uncharacterized protein (485 aa).

Residues 1–30 lie on the Cytoplasmic side of the membrane; sequence MFSWANIGSNEYLPLKNDRKAYLNQWAKRS. The helical transmembrane segment at 31-51 threads the bilayer; the sequence is GLAIAAICILGILILAIVKLF. At 52–485 the chain is on the extracellular side; sequence CFKAIIFPIV…DIEQAYSKLI (434 aa). Residue Asn-67 is glycosylated (N-linked (GlcNAc...) asparagine). The segment at 74 to 404 is phosphodiesterase; sequence STVIVISLDG…YEPLGVHGYD (331 aa). Catalysis depends on Thr-118, which acts as the Nucleophile. N-linked (GlcNAc...) asparagine glycosylation is found at Asn-306, Asn-338, Asn-453, and Asn-467.

It belongs to the nucleotide pyrophosphatase/phosphodiesterase family.

It localises to the membrane. This is an uncharacterized protein from Schizosaccharomyces pombe (strain 972 / ATCC 24843) (Fission yeast).